The primary structure comprises 410 residues: Venom metalloproteinase 2 (410 aa).

A signal peptide spans 1-22 (MDTFILTYSILFLALFIESIHS). N-linked (GlcNAc...) asparagine glycans are attached at residues Asn64, Asn112, Asn187, Asn231, Asn292, and Asn307. Residues 214–410 (FYPKLLVLVD…NNNVSKFIWS (197 aa)) enclose the Peptidase M12B domain. His365 serves as a coordination point for Zn(2+). Glu366 is an active-site residue. 2 residues coordinate Zn(2+): His369 and His375. A glycan (N-linked (GlcNAc...) asparagine) is linked at Asn403.

It in the C-terminal section; belongs to the venom metalloproteinase (M12B) family. In terms of assembly, monomer. Zn(2+) serves as cofactor. In terms of tissue distribution, expressed by the venom gland.

It is found in the secreted. With respect to regulation, the gelatinase activity is inhibited by EDTA. Its function is as follows. The recombinant protein has gelatinase activity. In vivo, injection of this recombinant into fifth instar L.oleracea (host) larvae results in partial insect mortality associated with the molt to sixth instar, with surviving insects showing retarded development and growth. This is Venom metalloproteinase 2 from Eulophus pennicornis (Parasitoid wasp).